We begin with the raw amino-acid sequence, 341 residues long: Beta-ketoacyl-[acyl-carrier-protein] synthase III 1 (341 aa).

Residues cysteine 113 and histidine 249 contribute to the active site. Positions 250–254 (QANIR) are ACP-binding. Asparagine 279 is a catalytic residue.

It belongs to the thiolase-like superfamily. FabH family. Homodimer.

The protein resides in the cytoplasm. The catalysed reaction is malonyl-[ACP] + acetyl-CoA + H(+) = 3-oxobutanoyl-[ACP] + CO2 + CoA. It functions in the pathway lipid metabolism; fatty acid biosynthesis. In terms of biological role, catalyzes the condensation reaction of fatty acid synthesis by the addition to an acyl acceptor of two carbons from malonyl-ACP. Catalyzes the first condensation reaction which initiates fatty acid synthesis and may therefore play a role in governing the total rate of fatty acid production. Possesses both acetoacetyl-ACP synthase and acetyl transacylase activities. Its substrate specificity determines the biosynthesis of branched-chain and/or straight-chain of fatty acids. The polypeptide is Beta-ketoacyl-[acyl-carrier-protein] synthase III 1 (Deinococcus radiodurans (strain ATCC 13939 / DSM 20539 / JCM 16871 / CCUG 27074 / LMG 4051 / NBRC 15346 / NCIMB 9279 / VKM B-1422 / R1)).